The sequence spans 327 residues: Malate dehydrogenase (327 aa).

12–18 (GAAGQIG) is a binding site for NAD(+). 2 residues coordinate substrate: arginine 93 and arginine 99. NAD(+)-binding positions include asparagine 106, glutamine 113, and 130–132 (VGN). Substrate contacts are provided by asparagine 132 and arginine 163. The active-site Proton acceptor is histidine 188.

Belongs to the LDH/MDH superfamily. MDH type 2 family.

It carries out the reaction (S)-malate + NAD(+) = oxaloacetate + NADH + H(+). Functionally, catalyzes the reversible oxidation of malate to oxaloacetate. This is Malate dehydrogenase from Cupriavidus metallidurans (strain ATCC 43123 / DSM 2839 / NBRC 102507 / CH34) (Ralstonia metallidurans).